Consider the following 300-residue polypeptide: Ubiquitin thioesterase otu2 (300 aa).

Disordered regions lie at residues 23-73 and 89-141; these read RKQL…QQED and TAEK…SEKM. Basic and acidic residues predominate over residues 48–61; sequence LSQKHATERQKLDK. Over residues 62-71 the composition is skewed to acidic residues; that stretch reads GDEETNETQQ. A compositionally biased stretch (polar residues) spans 89–109; that stretch reads TAEKSSVQSSLNTKENTPQQP. Residues 115-141 are compositionally biased toward basic and acidic residues; the sequence is RQKERLERRKAEMKKMSEQAELESEKM. The region spanning 161 to 298 is the OTU domain; the sequence is LVAVDIPADG…GAHYNSLLYR (138 aa).

Its subcellular location is the cytoplasm. The catalysed reaction is Thiol-dependent hydrolysis of ester, thioester, amide, peptide and isopeptide bonds formed by the C-terminal Gly of ubiquitin (a 76-residue protein attached to proteins as an intracellular targeting signal).. In terms of biological role, hydrolase that can remove conjugated ubiquitin from proteins and may therefore play an important regulatory role at the level of protein turnover by preventing degradation. The polypeptide is Ubiquitin thioesterase otu2 (otu2) (Schizosaccharomyces pombe (strain 972 / ATCC 24843) (Fission yeast)).